A 299-amino-acid chain; its full sequence is Probable endonuclease 4 (299 aa).

Residues His68, His110, Glu145, Asp179, His182, His214, Asp227, His229, and Glu259 each coordinate Zn(2+).

Belongs to the AP endonuclease 2 family. Zn(2+) is required as a cofactor.

The catalysed reaction is Endonucleolytic cleavage to 5'-phosphooligonucleotide end-products.. Endonuclease IV plays a role in DNA repair. It cleaves phosphodiester bonds at apurinic or apyrimidinic (AP) sites, generating a 3'-hydroxyl group and a 5'-terminal sugar phosphate. The chain is Probable endonuclease 4 from Exiguobacterium sibiricum (strain DSM 17290 / CCUG 55495 / CIP 109462 / JCM 13490 / 255-15).